We begin with the raw amino-acid sequence, 586 residues long: MRLLFAIALLGAVFAEDAWKAANVDRTIDATSQIVKVSTLYSFENVGNGPQSKVLIALSKEESATLSFISAGIDGSKGKLKISEKPAEKDLAVYEVDLRTPVAKGAKVTIRINLRITQVLEPLPSKIQQSDSQFVVLHTSAYVPSLYETVTQKTTIRTTQGGKLLSATTVSPSKQETERVIYGPYVNIPAFETKPVKVHYENNSPFVIATIVERFIEVSHWGNIAVEEYIELVHKGAELDGPFSRIDYQMDRRGRRQPALQQFTTVLPAQAKDIYYRDEIGNISTSAVRIRADSVDVEIRPRFPLFGGWKTSYVIGYNLPSEEYLYSKGNQYALKTKLFDHVFNDIVVEKLRTKVLLPEHVKRVKVATPYAVDRRPEELKPTYLDTTGRLVLVLEKENIVPDHSQFFTVTYEFEFVDMLREPLLASAFFFSLFFVIIVYSRFDFTISSDPAKDAEERSQIILGNLAKSVDSKQSAYEDLIEASQQYKSTKNDADLQEAKKTFIAARNQENSTLTDKIATLKTDSGASAAEKASELLKYDKTVFDAVDNYLKAVEKSTTKTAGTEEQQFLNKVKDARNRADSVLASI.

Positions 1–15 are cleaved as a signal peptide; it reads MRLLFAIALLGAVFA. Over 16 to 421 the chain is Lumenal; it reads EDAWKAANVD…EFEFVDMLRE (406 aa). A helical transmembrane segment spans residues 422–442; it reads PLLASAFFFSLFFVIIVYSRF. Residues 443–586 are Cytoplasmic-facing; that stretch reads DFTISSDPAK…NRADSVLASI (144 aa).

Belongs to the OST1 family. In terms of assembly, component of the oligosaccharyltransferase (OST) complex.

The protein localises to the endoplasmic reticulum membrane. The protein resides in the cytoplasmic granule. The protein operates within protein modification; protein glycosylation. In terms of biological role, subunit of the oligosaccharyl transferase (OST) complex that catalyzes the initial transfer of a defined glycan (Glc(3)Man(9)GlcNAc(2) in eukaryotes) from the lipid carrier dolichol-pyrophosphate to an asparagine residue within an Asn-X-Ser/Thr consensus motif in nascent polypeptide chains, the first step in protein N-glycosylation. N-glycosylation occurs cotranslationally and the complex associates with the Sec61 complex at the channel-forming translocon complex that mediates protein translocation across the endoplasmic reticulum (ER). All subunits are required for a maximal enzyme activity. The sequence is that of Dolichyl-diphosphooligosaccharide--protein glycosyltransferase subunit 1 from Caenorhabditis elegans.